A 351-amino-acid chain; its full sequence is Histidine-rich glycoprotein (351 aa).

An N-terminal signal peptide occupies residues 1-23 (MFTSLKKVATFSFLVWISQYSGS). Positions 24–47 (NSCSSSLVKHIPQTGSNLTFDRVL) are excised as a propeptide. An N-linked (GlcNAc...) asparagine glycan is attached at asparagine 40. Positions 57–91 (LHEEHHHHHPEEHHEPHHEEHHHHHPEEHHEPHHE) are enriched in basic and acidic residues. The interval 57–351 (LHEEHHHHHP…DAHHHHHHHH (295 aa)) is disordered. Tandem repeats lie at residues 59 to 74 (EEHHHHHPEEHHEPHH), 75 to 90 (EEHHHHHPEEHHEPHH), 91 to 107 (EEHHHHHPHPHHHHHHH), 108 to 123 (PPHHHHHLGHHHHHHH), 124 to 138 (AAHHHHHEEHHHHHH), and 139 to 153 (AAHHHHHEEHHHHHH). Residues 59 to 90 (EEHHHHHPEEHHEPHHEEHHHHHPEEHHEPHH) are 2 X 16 AA tandem repeats. Residues 91-123 (EEHHHHHPHPHHHHHHHPPHHHHHLGHHHHHHH) form a 2 X 17 AA tandem repeats region. Over residues 92-351 (EHHHHHPHPH…DAHHHHHHHH (260 aa)) the composition is skewed to basic residues. The tract at residues 124–153 (AAHHHHHEEHHHHHHAAHHHHHEEHHHHHH) is 2 X 15 AA tandem repeats. Positions 173-351 (APHHHHHHHH…DAHHHHHHHH (179 aa)) are 18 X 10 AA tandem repeats.

The polypeptide is Histidine-rich glycoprotein (Plasmodium lophurae).